The primary structure comprises 341 residues: Hypophosphite import ATP-binding protein HtxD (341 aa).

The ABC transporter domain maps to 6–249; sequence LQLKNVGKSY…RVHALYQVPA (244 aa). 38–45 lines the ATP pocket; it reads GTSGAGKS. The interval 278–341 is disordered; sequence IHTPHTRAAP…TGRGQDRGPG (64 aa). Composition is skewed to basic and acidic residues over residues 307 to 320 and 327 to 341; these read ADRR…DRTT and GGHD…RGPG.

This sequence belongs to the ABC transporter superfamily. Phosphonates importer (TC 3.A.1.9.1) family. As to quaternary structure, the complex is composed of two ATP-binding proteins (HtxD), two transmembrane proteins (HtxC and HtxE) and a solute-binding protein (HtxB).

The protein resides in the cell inner membrane. It carries out the reaction phosphinate(out) + ATP + H2O = phosphinate(in) + ADP + phosphate + H(+). Part of the ABC transporter complex HtxBCDE involved in hypophosphite import. Responsible for energy coupling to the transport system. In Stutzerimonas stutzeri (Pseudomonas stutzeri), this protein is Hypophosphite import ATP-binding protein HtxD (htxD).